The following is a 206-amino-acid chain: MKIDVTTLEAKKAGSVDLTDGVFALEPRGDILHRMVAWQLAKRQAGTHKTKGRSEIALTGKKFVKQKGSGGARHGDRKAPQFRGGGKAFGPVVRSHAFDMPKKVRALALKLALSAKAKSDNLVILDEAKLAEPRTKAAKDAFEKLGLKSVLIIDGAELDANFALAARNLPNVDVLPVQGINVYDILRREKLVLTKAAVESLEARFK.

The interval 65-85 (KQKGSGGARHGDRKAPQFRGG) is disordered.

The protein belongs to the universal ribosomal protein uL4 family. As to quaternary structure, part of the 50S ribosomal subunit.

Functionally, one of the primary rRNA binding proteins, this protein initially binds near the 5'-end of the 23S rRNA. It is important during the early stages of 50S assembly. It makes multiple contacts with different domains of the 23S rRNA in the assembled 50S subunit and ribosome. Forms part of the polypeptide exit tunnel. This is Large ribosomal subunit protein uL4 from Parvibaculum lavamentivorans (strain DS-1 / DSM 13023 / NCIMB 13966).